We begin with the raw amino-acid sequence, 408 residues long: Multidrug resistance protein MdtG (408 aa).

A run of 11 helical transmembrane segments spans residues 16 to 36, 58 to 78, 92 to 112, 115 to 135, 146 to 166, 173 to 193, 224 to 244, 256 to 276, 290 to 310, 319 to 339, and 378 to 398; these read LIVA…VMPF, IVFS…GGLA, LGMG…QFLI, ALLG…ATQV, TLST…GLLA, PVFF…LFCI, LFVT…ILTL, VAFI…LSAP, ILIT…YVQT, FLLG…LVYN, and AVFL…WNSL.

The protein belongs to the major facilitator superfamily. DHA1 family. MdtG (TC 2.A.1.2.20) subfamily.

It localises to the cell inner membrane. Its function is as follows. Confers resistance to fosfomycin and deoxycholate. The chain is Multidrug resistance protein MdtG from Escherichia coli O139:H28 (strain E24377A / ETEC).